A 376-amino-acid chain; its full sequence is Chaperone protein DnaJ (376 aa).

One can recognise a J domain in the interval 5 to 70; that stretch reads DYYEVLGVGR…DKKAAYDQFG (66 aa). The CR-type zinc finger occupies 132 to 210; the sequence is GLTKELRIPT…CHGDGRVEKS (79 aa). Zn(2+) contacts are provided by Cys145, Cys148, Cys162, Cys165, Cys184, Cys187, Cys198, and Cys201. 4 CXXCXGXG motif repeats span residues 145–152, 162–169, 184–191, and 198–205; these read CDLCDGSG, CTTCHGQG, CPTCHGRG, and CSKCHGDG.

It belongs to the DnaJ family. Homodimer. The cofactor is Zn(2+).

Its subcellular location is the cytoplasm. Participates actively in the response to hyperosmotic and heat shock by preventing the aggregation of stress-denatured proteins and by disaggregating proteins, also in an autonomous, DnaK-independent fashion. Unfolded proteins bind initially to DnaJ; upon interaction with the DnaJ-bound protein, DnaK hydrolyzes its bound ATP, resulting in the formation of a stable complex. GrpE releases ADP from DnaK; ATP binding to DnaK triggers the release of the substrate protein, thus completing the reaction cycle. Several rounds of ATP-dependent interactions between DnaJ, DnaK and GrpE are required for fully efficient folding. Also involved, together with DnaK and GrpE, in the DNA replication of plasmids through activation of initiation proteins. This chain is Chaperone protein DnaJ, found in Shewanella sp. (strain W3-18-1).